The following is a 207-amino-acid chain: Small ribosomal subunit protein uS5 (207 aa).

The tract at residues Met1–Trp51 is disordered. Residues Glu24–Trp51 are compositionally biased toward basic and acidic residues. Residues Trp51–Val114 form the S5 DRBM domain.

The protein belongs to the universal ribosomal protein uS5 family. In terms of assembly, part of the 30S ribosomal subunit. Contacts proteins S4 and S8.

With S4 and S12 plays an important role in translational accuracy. Functionally, located at the back of the 30S subunit body where it stabilizes the conformation of the head with respect to the body. This chain is Small ribosomal subunit protein uS5, found in Prochlorococcus marinus (strain MIT 9312).